Here is a 431-residue protein sequence, read N- to C-terminus: UDP-N-acetylglucosamine 1-carboxyvinyltransferase (431 aa).

22–23 (KN) contributes to the phosphoenolpyruvate binding site. A UDP-N-acetyl-alpha-D-glucosamine-binding site is contributed by Arg-102. The active-site Proton donor is the Cys-126. Cys-126 is modified (2-(S-cysteinyl)pyruvic acid O-phosphothioketal). Residues 131–135 (RPVDL), Asp-316, and Ile-338 contribute to the UDP-N-acetyl-alpha-D-glucosamine site.

The protein belongs to the EPSP synthase family. MurA subfamily.

Its subcellular location is the cytoplasm. The enzyme catalyses phosphoenolpyruvate + UDP-N-acetyl-alpha-D-glucosamine = UDP-N-acetyl-3-O-(1-carboxyvinyl)-alpha-D-glucosamine + phosphate. It participates in cell wall biogenesis; peptidoglycan biosynthesis. Functionally, cell wall formation. Adds enolpyruvyl to UDP-N-acetylglucosamine. In Beijerinckia indica subsp. indica (strain ATCC 9039 / DSM 1715 / NCIMB 8712), this protein is UDP-N-acetylglucosamine 1-carboxyvinyltransferase.